A 119-amino-acid polypeptide reads, in one-letter code: UPF0102 protein FN1370 (119 aa).

Belongs to the UPF0102 family.

In Fusobacterium nucleatum subsp. nucleatum (strain ATCC 25586 / DSM 15643 / BCRC 10681 / CIP 101130 / JCM 8532 / KCTC 2640 / LMG 13131 / VPI 4355), this protein is UPF0102 protein FN1370.